The primary structure comprises 120 residues: uncharacterized protein (120 aa).

The chain crosses the membrane as a helical span at residues 47-63 (VSIVIGLCTVLISAGAG).

The protein localises to the membrane. This is an uncharacterized protein from Sinorhizobium fredii (strain NBRC 101917 / NGR234).